A 51-amino-acid chain; its full sequence is Large ribosomal subunit protein eL39 (51 aa).

It belongs to the eukaryotic ribosomal protein eL39 family.

The polypeptide is Large ribosomal subunit protein eL39 (Methanococcoides burtonii (strain DSM 6242 / NBRC 107633 / OCM 468 / ACE-M)).